The primary structure comprises 256 residues: Pimeloyl-[acyl-carrier protein] methyl ester esterase (256 aa).

In terms of domain architecture, AB hydrolase-1 spans 15–242 (HLVLLHGWGL…AAHAPFISHP (228 aa)). Residues Trp22, 82-83 (SL), and 143-147 (FLALQ) contribute to the substrate site. The active-site Nucleophile is the Ser82. Residues Asp207 and His235 contribute to the active site. His235 contributes to the substrate binding site.

The protein belongs to the AB hydrolase superfamily. Carboxylesterase BioH family. As to quaternary structure, monomer.

Its subcellular location is the cytoplasm. It carries out the reaction 6-carboxyhexanoyl-[ACP] methyl ester + H2O = 6-carboxyhexanoyl-[ACP] + methanol + H(+). It functions in the pathway cofactor biosynthesis; biotin biosynthesis. In terms of biological role, the physiological role of BioH is to remove the methyl group introduced by BioC when the pimeloyl moiety is complete. It allows to synthesize pimeloyl-ACP via the fatty acid synthetic pathway through the hydrolysis of the ester bonds of pimeloyl-ACP esters. The protein is Pimeloyl-[acyl-carrier protein] methyl ester esterase of Escherichia coli O45:K1 (strain S88 / ExPEC).